A 645-amino-acid polypeptide reads, in one-letter code: L-aspartate oxidase, chloroplastic (645 aa).

A chloroplast-targeting transit peptide spans 1 to 70 (MAALMNGFGS…RMRHKVGSIR (70 aa)). FAD is bound by residues 92–95 (SGVA), K114, 121–128 (NTNYAQGG), and D292. The active-site Proton donor/acceptor is R368. Residues E453 and 469–470 (SL) each bind FAD.

The protein belongs to the FAD-dependent oxidoreductase 2 family. NadB subfamily. The cofactor is FAD.

The protein resides in the plastid. It is found in the chloroplast. The enzyme catalyses L-aspartate + O2 = iminosuccinate + H2O2. It participates in cofactor biosynthesis; NAD(+) biosynthesis; iminoaspartate from L-aspartate (oxidase route): step 1/1. Its function is as follows. Catalyzes the oxidation of L-aspartate to iminoaspartate. This is L-aspartate oxidase, chloroplastic from Oryza sativa subsp. japonica (Rice).